The sequence spans 188 residues: Probable nicotinate-nucleotide adenylyltransferase (188 aa).

Belongs to the NadD family.

It catalyses the reaction nicotinate beta-D-ribonucleotide + ATP + H(+) = deamido-NAD(+) + diphosphate. The protein operates within cofactor biosynthesis; NAD(+) biosynthesis; deamido-NAD(+) from nicotinate D-ribonucleotide: step 1/1. Its function is as follows. Catalyzes the reversible adenylation of nicotinate mononucleotide (NaMN) to nicotinic acid adenine dinucleotide (NaAD). The chain is Probable nicotinate-nucleotide adenylyltransferase from Salinispora tropica (strain ATCC BAA-916 / DSM 44818 / JCM 13857 / NBRC 105044 / CNB-440).